A 164-amino-acid chain; its full sequence is Putative 4-hydroxy-4-methyl-2-oxoglutarate aldolase (164 aa).

Residues 80-83 (GGNL) and Arg-102 each bind substrate. Asp-103 is a binding site for a divalent metal cation.

The protein belongs to the class II aldolase/RraA-like family. In terms of assembly, homotrimer. The cofactor is a divalent metal cation.

It catalyses the reaction 4-hydroxy-4-methyl-2-oxoglutarate = 2 pyruvate. The catalysed reaction is oxaloacetate + H(+) = pyruvate + CO2. Functionally, catalyzes the aldol cleavage of 4-hydroxy-4-methyl-2-oxoglutarate (HMG) into 2 molecules of pyruvate. Also contains a secondary oxaloacetate (OAA) decarboxylase activity due to the common pyruvate enolate transition state formed following C-C bond cleavage in the retro-aldol and decarboxylation reactions. The chain is Putative 4-hydroxy-4-methyl-2-oxoglutarate aldolase from Paraburkholderia phytofirmans (strain DSM 17436 / LMG 22146 / PsJN) (Burkholderia phytofirmans).